The primary structure comprises 377 residues: 23S rRNA (uracil(747)-C(5))-methyltransferase RlmC (377 aa).

Residues cysteine 3, cysteine 11, cysteine 14, and cysteine 87 each contribute to the [4Fe-4S] cluster site. Residues glutamine 212, phenylalanine 241, glutamate 262, and asparagine 307 each contribute to the S-adenosyl-L-methionine site. Cysteine 334 acts as the Nucleophile in catalysis.

Belongs to the class I-like SAM-binding methyltransferase superfamily. RNA M5U methyltransferase family. RlmC subfamily.

It catalyses the reaction uridine(747) in 23S rRNA + S-adenosyl-L-methionine = 5-methyluridine(747) in 23S rRNA + S-adenosyl-L-homocysteine + H(+). Its function is as follows. Catalyzes the formation of 5-methyl-uridine at position 747 (m5U747) in 23S rRNA. This Photorhabdus laumondii subsp. laumondii (strain DSM 15139 / CIP 105565 / TT01) (Photorhabdus luminescens subsp. laumondii) protein is 23S rRNA (uracil(747)-C(5))-methyltransferase RlmC.